The following is a 415-amino-acid chain: Adenylosuccinate synthetase (415 aa).

Residues 11–17 (GDEGKGK) and 39–41 (GHT) each bind GTP. Asp12 (proton acceptor) is an active-site residue. The Mg(2+) site is built by Asp12 and Gly39. IMP contacts are provided by residues 12 to 15 (DEGK), 37 to 40 (NAGH), Thr124, Arg138, Gln218, Thr233, and Arg297. His40 (proton donor) is an active-site residue. A substrate-binding site is contributed by 293 to 299 (TTTGRAR). Residues Arg299, 325–327 (KLD), and 403–405 (STS) each bind GTP.

This sequence belongs to the adenylosuccinate synthetase family. Homodimer. The cofactor is Mg(2+).

Its subcellular location is the cytoplasm. It carries out the reaction IMP + L-aspartate + GTP = N(6)-(1,2-dicarboxyethyl)-AMP + GDP + phosphate + 2 H(+). The protein operates within purine metabolism; AMP biosynthesis via de novo pathway; AMP from IMP: step 1/2. Functionally, plays an important role in the de novo pathway of purine nucleotide biosynthesis. Catalyzes the first committed step in the biosynthesis of AMP from IMP. The protein is Adenylosuccinate synthetase of Helicobacter hepaticus (strain ATCC 51449 / 3B1).